Here is a 1700-residue protein sequence, read N- to C-terminus: uncharacterized protein (1700 aa).

Residues A986–V1006 form a helical membrane-spanning segment. Coiled-coil stretches lie at residues D1246–K1278 and Q1657–D1684. Positions D1650–E1700 are disordered. Residues T1651–E1700 are compositionally biased toward acidic residues.

The protein resides in the host membrane. The protein localises to the virion. This is an uncharacterized protein from Acanthamoeba polyphaga (Amoeba).